The sequence spans 148 residues: UPF0260 protein KPN78578_22800 (148 aa).

This sequence belongs to the UPF0260 family.

This chain is UPF0260 protein KPN78578_22800, found in Klebsiella pneumoniae subsp. pneumoniae (strain ATCC 700721 / MGH 78578).